Here is an 886-residue protein sequence, read N- to C-terminus: Protein translocase subunit SecA (886 aa).

ATP contacts are provided by residues Q81, 99–103 (GEGKT), and D489.

Belongs to the SecA family.

The protein resides in the plastid. It is found in the chloroplast stroma. The protein localises to the chloroplast thylakoid membrane. The catalysed reaction is ATP + H2O + cellular proteinSide 1 = ADP + phosphate + cellular proteinSide 2.. In terms of biological role, has a central role in coupling the hydrolysis of ATP to the transfer of proteins across the thylakoid membrane. The chain is Protein translocase subunit SecA from Phaeodactylum tricornutum (strain CCAP 1055/1).